Here is a 213-residue protein sequence, read N- to C-terminus: MGKYQPSFQTKKGWTEVICGPMFSGKTEKLLHKIKRWKIAKISVVIFKPIIDTRQTNIVKSRNGEYDQAITINSPFEIYDHLVDKNYQIVAIDEAQFFSNEIIEVVTTLNEIGTNVIISGLDTDFRAEPFGCIPQLLAIADVVNKLDAICNVCGSLAQRTQRLVNKNTNDNLVLIGDAEAYEARCKLHHSFLTKKHVTVKTKNFKEQVQGKTQ.

Residues 20–27 (GPMFSGKT) and 93–96 (DEAQ) contribute to the ATP site. Residue Glu94 is the Proton acceptor of the active site. Cys150, Cys153, Cys185, and His188 together coordinate Zn(2+).

The protein belongs to the thymidine kinase family. As to quaternary structure, homotetramer.

The protein localises to the cytoplasm. The enzyme catalyses thymidine + ATP = dTMP + ADP + H(+). In Mycoplasma genitalium (strain ATCC 33530 / DSM 19775 / NCTC 10195 / G37) (Mycoplasmoides genitalium), this protein is Thymidine kinase.